A 238-amino-acid polypeptide reads, in one-letter code: Ribonuclease HII (238 aa).

Residues 12-197 (GIVAGVDEAG…VLELLTDDLL (186 aa)) form the RNase H type-2 domain. A divalent metal cation-binding residues include Asp18, Glu19, and Asp107.

Belongs to the RNase HII family. Mn(2+) is required as a cofactor. Mg(2+) serves as cofactor.

It localises to the cytoplasm. The enzyme catalyses Endonucleolytic cleavage to 5'-phosphomonoester.. In terms of biological role, endonuclease that specifically degrades the RNA of RNA-DNA hybrids. This is Ribonuclease HII from Thermotoga petrophila (strain ATCC BAA-488 / DSM 13995 / JCM 10881 / RKU-1).